Here is a 221-residue protein sequence, read N- to C-terminus: GDP-perosamine N-acetyltransferase (221 aa).

Residue His-139 is the Proton acceptor of the active site.

It belongs to the transferase hexapeptide repeat family. As to quaternary structure, homotrimer.

It carries out the reaction GDP-alpha-D-perosamine + acetyl-CoA = GDP-N-acetyl-alpha-D-perosamine + CoA + H(+). It participates in bacterial outer membrane biogenesis; LPS O-antigen biosynthesis. Its function is as follows. Catalyzes the transfer of an acetyl residue from acetyl-CoA onto GDP-perosamine to form GDP-N-acetyl-perosamine. In Escherichia coli O157:H7, this protein is GDP-perosamine N-acetyltransferase.